The chain runs to 546 residues: Glucose-6-phosphate isomerase (546 aa).

E357 serves as the catalytic Proton donor. Residues H389 and K509 contribute to the active site.

It belongs to the GPI family.

It localises to the cytoplasm. It catalyses the reaction alpha-D-glucose 6-phosphate = beta-D-fructose 6-phosphate. It functions in the pathway carbohydrate biosynthesis; gluconeogenesis. It participates in carbohydrate degradation; glycolysis; D-glyceraldehyde 3-phosphate and glycerone phosphate from D-glucose: step 2/4. Functionally, catalyzes the reversible isomerization of glucose-6-phosphate to fructose-6-phosphate. This Anaeromyxobacter sp. (strain K) protein is Glucose-6-phosphate isomerase.